Reading from the N-terminus, the 601-residue chain is Probable cytochrome P450 525A1 (601 aa).

The helical transmembrane segment at 12–32 threads the bilayer; it reads ISYFLTCSIFGFILWILTEQI. Positions 205 to 253 are disordered; sequence NNNNNNNNNNNNNNNNNNNNNNNNNNNNNNNNNNNNNNNNNNNNNNNNN. Residue cysteine 544 participates in heme binding.

Belongs to the cytochrome P450 family. The cofactor is heme.

It is found in the membrane. The chain is Probable cytochrome P450 525A1 (cyp525A1) from Dictyostelium discoideum (Social amoeba).